A 187-amino-acid chain; its full sequence is Elongation factor P (187 aa).

It belongs to the elongation factor P family.

Its subcellular location is the cytoplasm. Its pathway is protein biosynthesis; polypeptide chain elongation. Functionally, involved in peptide bond synthesis. Stimulates efficient translation and peptide-bond synthesis on native or reconstituted 70S ribosomes in vitro. Probably functions indirectly by altering the affinity of the ribosome for aminoacyl-tRNA, thus increasing their reactivity as acceptors for peptidyl transferase. The protein is Elongation factor P of Azobacteroides pseudotrichonymphae genomovar. CFP2.